The primary structure comprises 728 residues: MAKVLTLLVLRLLMNLLLIGWISLWIIKPTTIWIQSWRQAEDTARHTFFGYYGLNFAVFSFPPIALSIVGLIYLSLLPQHHHPTRGGRGAAITVSRPAIINSFIGIVSCFEILALLLFLLFLAWNFYARVSNDFKKLMPVKTMNLNLWQLKYYRVATRFGLLAEACLSLLLFPVLRGLSMFRLLNIEFAASVKYHVWFGTGLIFFSLVHGGSTLFIWTITHHIEEEIWKWQRTGRVYVAGLISLVTGLLMWITSLPQIRRKNFEVFYYTHHLYIVFLVAFLFHAGDRHFYWVLPGMFLFGLDKILRIVQSRSESCILSANLFSCKAIELVLPKDPMLNYAPSSFIFLNIPLVSRFQWHPFSIISSSSVDKHSLSIMMKCEGDWTNSVYNKIEEAANCENKINNIIVRVEGPYGPASVDFLRYDNLFLVAGGIGITPFLSILKELASKNRLKSPKRVQLVFAVRTFQDLNMLLPIASIIFNPIYNLNLKLKVFVTQEKKPSNGTTTLQEFLAQSQVQSIHLGTDEDYSRFPIRGPESFRWLATLVLITVLTFLGFLIGLSHFFIPSEHKNHSGVMKLAASGAMKTAKEKVPSWVPDLIIIVSYVIAISVGGFAATILQRRRKHKEAPRMSKEVVIKPEERNFTELKPIPITEEHEIHIGERPKLEEIMSEFEKNLRGWSSVGVLVCGPESVKEAVASMCRQWPQCFGVEDLRRSRMKMNLNFHSLNFNL.

The transit peptide at 1–24 (MAKVLTLLVLRLLMNLLLIGWISL) directs the protein to the mitochondrion. Helical transmembrane passes span 56–74 (FAVF…LIYL), 104–127 (IGIV…WNFY), 194–217 (YHVW…LFIW), 269–293 (THHL…YWVL), and 316–336 (ILSA…KDPM). One can recognise a Ferric oxidoreductase domain in the interval 159 to 281 (FGLLAEACLS…LYIVFLVAFL (123 aa)). Heme-binding residues include histidine 195, histidine 209, histidine 270, and histidine 283. One can recognise an FAD-binding FR-type domain in the interval 300-418 (GLDKILRIVQ…EGPYGPASVD (119 aa)). 358–361 (HPFS) provides a ligand contact to FAD. 410–413 (GPYG) is an NAD(+) binding site. A run of 2 helical transmembrane segments spans residues 537-559 (FRWL…IGLS) and 595-616 (DLII…ATIL).

The protein belongs to the ferric reductase (FRE) family. FAD is required as a cofactor. In terms of tissue distribution, expressed in shoots. Detected in roots, pedicels, flowers, siliques and leaf veins.

The protein resides in the mitochondrion membrane. It catalyses the reaction 2 a Fe(II)-siderophore + NAD(+) + H(+) = 2 a Fe(III)-siderophore + NADH. Functionally, ferric chelate reductase probably involved in iron reduction in leaf veins for transport. May participate in the transport of electrons to a Fe(3+) ion via FAD and heme intermediates. This is Ferric reduction oxidase 8, mitochondrial (FRO8) from Arabidopsis thaliana (Mouse-ear cress).